Here is a 345-residue protein sequence, read N- to C-terminus: Tetraacyldisaccharide 4'-kinase (345 aa).

Residue 61 to 68 (TAGGTGKT) coordinates ATP.

This sequence belongs to the LpxK family.

The catalysed reaction is a lipid A disaccharide + ATP = a lipid IVA + ADP + H(+). It participates in glycolipid biosynthesis; lipid IV(A) biosynthesis; lipid IV(A) from (3R)-3-hydroxytetradecanoyl-[acyl-carrier-protein] and UDP-N-acetyl-alpha-D-glucosamine: step 6/6. Functionally, transfers the gamma-phosphate of ATP to the 4'-position of a tetraacyldisaccharide 1-phosphate intermediate (termed DS-1-P) to form tetraacyldisaccharide 1,4'-bis-phosphate (lipid IVA). This chain is Tetraacyldisaccharide 4'-kinase, found in Xanthomonas euvesicatoria pv. vesicatoria (strain 85-10) (Xanthomonas campestris pv. vesicatoria).